Consider the following 137-residue polypeptide: Large ribosomal subunit protein uL16 (137 aa).

The protein belongs to the universal ribosomal protein uL16 family. In terms of assembly, part of the 50S ribosomal subunit.

Its function is as follows. Binds 23S rRNA and is also seen to make contacts with the A and possibly P site tRNAs. The protein is Large ribosomal subunit protein uL16 of Allorhizobium ampelinum (strain ATCC BAA-846 / DSM 112012 / S4) (Agrobacterium vitis (strain S4)).